A 306-amino-acid polypeptide reads, in one-letter code: Pentalenolactone F synthase (306 aa).

2 residues coordinate Fe cation: His-110 and Asp-112. Residues Thr-138 and Trp-258 each coordinate 2-oxoglutarate. His-273 lines the Fe cation pocket. Arg-284 is a 2-oxoglutarate binding site.

Belongs to the TfdA dioxygenase family. Requires Fe(2+) as cofactor.

The enzyme catalyses pentalenolactone D + 2 2-oxoglutarate + 2 O2 = pentalenolactone F + 2 succinate + 2 CO2 + H2O. Its pathway is antibiotic biosynthesis; neopentalenolactone biosynthesis. Its activity is regulated as follows. Activated by ascorbate. Its function is as follows. Catalyzes the Fe(2+) and alpha-ketoglutarate-dependent oxidation of pentalenolactone D to pentalenolactone F. Also able to catalyze the oxidation of pentalenolactone D to pentalenolactone E. In presence of neopentalenolactone D, mediates production of PL308 and possibly neopentalenolactone E. The protein is Pentalenolactone F synthase (ptlD) of Streptomyces avermitilis (strain ATCC 31267 / DSM 46492 / JCM 5070 / NBRC 14893 / NCIMB 12804 / NRRL 8165 / MA-4680).